Consider the following 816-residue polypeptide: Metabotropic glutamate receptor-like protein E (816 aa).

Residues 1 to 27 (MKIKIGNILKNVVILVIFSLFISKINS) form the signal peptide. Residues 28–436 (EVVKPNPAKP…QVVVFDRTLN (409 aa)) lie on the Extracellular side of the membrane. Residues N68, N311, and N388 are each glycosylated (N-linked (GlcNAc...) asparagine). A helical membrane pass occupies residues 437–457 (IVLGVITGVCVLIVIGIGSVI). Over 458 to 469 (ALQWRKFRYSSP) the chain is Cytoplasmic. The chain crosses the membrane as a helical span at residues 470-490 (LFCMFIIIGALMGLASVFTLL). The Extracellular portion of the chain corresponds to 491-496 (PTPTTP). The helical transmembrane segment at 497-517 (LCSGFPWLLGLGYVIVFGTLF) threads the bilayer. At 518–541 (TKTWRTWRLFSNARKFKIIRITNK) the chain is on the cytoplasmic side. The helical transmembrane segment at 542–562 (FIITLVGGFVLLESIFMIIWT) threads the bilayer. The Extracellular portion of the chain corresponds to 563-590 (AVDRPIPLAEPIFKAGEAQLQCTSDSEA). Residues 591–611 (WWYVFVFYKVFYILFGVFLAF) form a helical membrane-spanning segment. At 612 to 625 (KTRNVVDSLNESKP) the chain is on the cytoplasmic side. A helical membrane pass occupies residues 626-646 (ITLALYNLTFVMVVAIALGFI). Residues 647–653 (LRDNPIA) lie on the Extracellular side of the membrane. A helical transmembrane segment spans residues 654–674 (IIVIQTIAILLGFTVTVSVLF). The Cytoplasmic segment spans residues 675–816 (LPKVWMILSG…KKKKKKNNNK (142 aa)). The interval 697 to 718 (DSMGRSNGNTTEAESTRGYTNK) is disordered.

It belongs to the G-protein coupled receptor 3 family.

Its subcellular location is the membrane. In terms of biological role, may be involved in early development in cAMP sensing and subsequent chemotactic response. Probable receptor of GABA and glutamate, leading respectively to the induction or inhibition of SDF-2 formation. This Dictyostelium discoideum (Social amoeba) protein is Metabotropic glutamate receptor-like protein E (grlE).